We begin with the raw amino-acid sequence, 181 residues long: Bifunctional protein PyrR (181 aa).

Positions Val-100–Thr-112 match the PRPP-binding motif.

This sequence belongs to the purine/pyrimidine phosphoribosyltransferase family. PyrR subfamily. As to quaternary structure, homodimer and homohexamer; in equilibrium.

The catalysed reaction is UMP + diphosphate = 5-phospho-alpha-D-ribose 1-diphosphate + uracil. Its function is as follows. Regulates transcriptional attenuation of the pyrimidine nucleotide (pyr) operon by binding in a uridine-dependent manner to specific sites on pyr mRNA. This disrupts an antiterminator hairpin in the RNA and favors formation of a downstream transcription terminator, leading to a reduced expression of downstream genes. Also displays a weak uracil phosphoribosyltransferase activity which is not physiologically significant. In Pelotomaculum thermopropionicum (strain DSM 13744 / JCM 10971 / SI), this protein is Bifunctional protein PyrR.